The primary structure comprises 254 residues: Ribonuclease HII (254 aa).

In terms of domain architecture, RNase H type-2 spans 67-254 (IVIAGVDEVG…HRMSFLKNII (188 aa)). Residues aspartate 73, glutamate 74, and aspartate 170 each contribute to the a divalent metal cation site.

This sequence belongs to the RNase HII family. Requires Mn(2+) as cofactor. Mg(2+) serves as cofactor.

Its subcellular location is the cytoplasm. The catalysed reaction is Endonucleolytic cleavage to 5'-phosphomonoester.. Functionally, endonuclease that specifically degrades the RNA of RNA-DNA hybrids. The polypeptide is Ribonuclease HII (Clostridium acetobutylicum (strain ATCC 824 / DSM 792 / JCM 1419 / IAM 19013 / LMG 5710 / NBRC 13948 / NRRL B-527 / VKM B-1787 / 2291 / W)).